Reading from the N-terminus, the 270-residue chain is Putative pyruvate, phosphate dikinase regulatory protein (270 aa).

151 to 158 (GVSRTSKT) contacts ADP.

It belongs to the pyruvate, phosphate/water dikinase regulatory protein family. PDRP subfamily.

It catalyses the reaction N(tele)-phospho-L-histidyl/L-threonyl-[pyruvate, phosphate dikinase] + ADP = N(tele)-phospho-L-histidyl/O-phospho-L-threonyl-[pyruvate, phosphate dikinase] + AMP + H(+). The catalysed reaction is N(tele)-phospho-L-histidyl/O-phospho-L-threonyl-[pyruvate, phosphate dikinase] + phosphate + H(+) = N(tele)-phospho-L-histidyl/L-threonyl-[pyruvate, phosphate dikinase] + diphosphate. In terms of biological role, bifunctional serine/threonine kinase and phosphorylase involved in the regulation of the pyruvate, phosphate dikinase (PPDK) by catalyzing its phosphorylation/dephosphorylation. The chain is Putative pyruvate, phosphate dikinase regulatory protein from Lysinibacillus sphaericus (strain C3-41).